Reading from the N-terminus, the 156-residue chain is 6,7-dimethyl-8-ribityllumazine synthase (156 aa).

5-amino-6-(D-ribitylamino)uracil-binding positions include Phe23, 57 to 59, and 81 to 83; these read AFE and TVI. 86-87 lines the (2S)-2-hydroxy-3-oxobutyl phosphate pocket; it reads ST. His89 serves as the catalytic Proton donor. Phe114 provides a ligand contact to 5-amino-6-(D-ribitylamino)uracil. Arg128 lines the (2S)-2-hydroxy-3-oxobutyl phosphate pocket.

Belongs to the DMRL synthase family. In terms of assembly, forms an icosahedral capsid composed of 60 subunits, arranged as a dodecamer of pentamers.

The enzyme catalyses (2S)-2-hydroxy-3-oxobutyl phosphate + 5-amino-6-(D-ribitylamino)uracil = 6,7-dimethyl-8-(1-D-ribityl)lumazine + phosphate + 2 H2O + H(+). Its pathway is cofactor biosynthesis; riboflavin biosynthesis; riboflavin from 2-hydroxy-3-oxobutyl phosphate and 5-amino-6-(D-ribitylamino)uracil: step 1/2. In terms of biological role, catalyzes the formation of 6,7-dimethyl-8-ribityllumazine by condensation of 5-amino-6-(D-ribitylamino)uracil with 3,4-dihydroxy-2-butanone 4-phosphate. This is the penultimate step in the biosynthesis of riboflavin. In Shouchella clausii (strain KSM-K16) (Alkalihalobacillus clausii), this protein is 6,7-dimethyl-8-ribityllumazine synthase.